We begin with the raw amino-acid sequence, 515 residues long: Alpha,alpha-trehalose-phosphate synthase [UDP-forming] 1 (515 aa).

D-glucose 6-phosphate-binding residues include Tyr97 and Asp151. UDP-binding residues include Arg287 and Lys292. Residues Arg287 and Lys292 each contribute to the UDP-alpha-D-glucose site. Residue Arg325 participates in D-glucose 6-phosphate binding. UDP is bound by residues Val364 and 390-394 (LVAYE). Position 386-394 (386-394 (DGMNLVAYE)) interacts with UDP-alpha-D-glucose. The segment at 483 to 515 (GKFQSRKAKLPESADAEKPMNGSGESEESQTTQ) is disordered. The span at 491 to 500 (KLPESADAEK) shows a compositional bias: basic and acidic residues.

Belongs to the glycosyltransferase 20 family.

It carries out the reaction D-glucose 6-phosphate + UDP-alpha-D-glucose = alpha,alpha-trehalose 6-phosphate + UDP + H(+). It functions in the pathway carbohydrate biosynthesis. In terms of biological role, synthase catalytic subunit of the trehalose synthase complex that catalyzes the production of trehalose from glucose-6-phosphate and UDP-alpha-D-glucose in a two step process. The disaccharide trehalose serves as a storage carbohydrate that is mobilized during conidial germination. Regulates the level of trehalose as a protectant for cell integrity during thermal and oxidative stress. This Aspergillus fumigatus (strain ATCC MYA-4609 / CBS 101355 / FGSC A1100 / Af293) (Neosartorya fumigata) protein is Alpha,alpha-trehalose-phosphate synthase [UDP-forming] 1.